Consider the following 386-residue polypeptide: Succinyl-diaminopimelate desuccinylase (386 aa).

Histidine 72 is a Zn(2+) binding site. Residue aspartate 74 is part of the active site. Residue aspartate 105 coordinates Zn(2+). Catalysis depends on glutamate 139, which acts as the Proton acceptor. Zn(2+) is bound by residues glutamate 140, glutamate 168, and histidine 353.

The protein belongs to the peptidase M20A family. DapE subfamily. Homodimer. Zn(2+) serves as cofactor. It depends on Co(2+) as a cofactor.

It carries out the reaction N-succinyl-(2S,6S)-2,6-diaminopimelate + H2O = (2S,6S)-2,6-diaminopimelate + succinate. The protein operates within amino-acid biosynthesis; L-lysine biosynthesis via DAP pathway; LL-2,6-diaminopimelate from (S)-tetrahydrodipicolinate (succinylase route): step 3/3. Functionally, catalyzes the hydrolysis of N-succinyl-L,L-diaminopimelic acid (SDAP), forming succinate and LL-2,6-diaminopimelate (DAP), an intermediate involved in the bacterial biosynthesis of lysine and meso-diaminopimelic acid, an essential component of bacterial cell walls. The chain is Succinyl-diaminopimelate desuccinylase from Rhodospirillum centenum (strain ATCC 51521 / SW).